A 196-amino-acid chain; its full sequence is tRNA(Phe) 7-((3-amino-3-carboxypropyl)-4-demethylwyosine(37)-N(4))-methyltransferase 1 (196 aa).

Belongs to the TYW3 family.

It catalyses the reaction 4-demethyl-7-[(3S)-3-amino-3-carboxypropyl]wyosine(37) in tRNA(Phe) + S-adenosyl-L-methionine = 7-[(3S)-3-amino-3-carboxypropyl]wyosine(37) in tRNA(Phe) + S-adenosyl-L-homocysteine + H(+). S-adenosyl-L-methionine-dependent methyltransferase that acts as a component of the wyosine derivatives biosynthesis pathway. Probably methylates N-4 position of wybutosine-86 to produce wybutosine-72. The sequence is that of tRNA(Phe) 7-((3-amino-3-carboxypropyl)-4-demethylwyosine(37)-N(4))-methyltransferase 1 from Pyrococcus horikoshii (strain ATCC 700860 / DSM 12428 / JCM 9974 / NBRC 100139 / OT-3).